The following is a 23-amino-acid chain: Phallacidin proprotein (23 aa).

A propeptide is located at residue P1. The segment at residues A2–P8 is a cross-link (cyclopeptide (Ala-Pro)). The 2'-cysteinyl-6'-hydroxytryptophan sulfoxide (Trp-Cys) cross-link spans W3–C7. The propeptide occupies C9–K23.

It belongs to the MSDIN fungal toxin family. Post-translationally, processed by the macrocyclase-peptidase enzyme POPB to yield a toxic cyclic heptapeptide. POPB first removes 10 residues from the N-terminus. Conformational trapping of the remaining peptide forces the enzyme to release this intermediate rather than proceed to macrocyclization. The enzyme rebinds the remaining peptide in a different conformation and catalyzes macrocyclization of the N-terminal 7 residues.

Functionally, major toxin that belongs to the bicyclic heptapeptides called phallotoxins. Although structurally related to amatoxins, phallotoxins have a different mode of action, which is the stabilization of F-actin. Phallotoxins are poisonous when administered parenterally, but not orally because of poor absorption. The protein is Phallacidin proprotein of Amanita fuliginea (East Asian brown death cap).